Here is a 37-residue protein sequence, read N- to C-terminus: Esculentin-2Rb (37 aa).

Cys-31 and Cys-37 are joined by a disulfide.

Expressed by the skin glands.

Its subcellular location is the secreted. Functionally, antimicrobial peptide. This chain is Esculentin-2Rb, found in Pelophylax ridibundus (Marsh frog).